Here is a 71-residue protein sequence, read N- to C-terminus: MIIPVRCFTCGKVIGNKWDQYLDLLQLDYTEGDALDALQLVRYCCRRMLMTHVDLIEKLLNYNTLEKSDNS.

4 residues coordinate Zn(2+): Cys-7, Cys-10, Cys-44, and Cys-45.

The protein belongs to the archaeal Rpo10/eukaryotic RPB10 RNA polymerase subunit family. Component of the RNA polymerase II, IV and V complexes. Interacts with NRPD1.

It is found in the nucleus. In terms of biological role, DNA-dependent RNA polymerase catalyzes the transcription of DNA into RNA using the four ribonucleoside triphosphates as substrates. Component of RNA polymerase II which synthesizes mRNA precursors and many functional non-coding RNAs. Pol II is the central component of the basal RNA polymerase II transcription machinery. It is composed of mobile elements that move relative to each other. Component of RNA polymerases IV and V which mediate short-interfering RNAs (siRNA) accumulation and subsequent RNA-directed DNA methylation-dependent (RdDM) transcriptional gene silencing (TGS) of endogenous repeated sequences, including transposable elements. This is DNA-directed RNA polymerases II, IV and V subunit 10 (NRPB10) from Arabidopsis thaliana (Mouse-ear cress).